Reading from the N-terminus, the 418-residue chain is Glutamyl-tRNA reductase (418 aa).

Residues 49–52, serine 109, 114–116, and glutamine 120 each bind substrate; these read TCNR and EPQ. Cysteine 50 serves as the catalytic Nucleophile. Position 189–194 (189–194) interacts with NADP(+); sequence GAGETI.

The protein belongs to the glutamyl-tRNA reductase family. Homodimer.

The enzyme catalyses (S)-4-amino-5-oxopentanoate + tRNA(Glu) + NADP(+) = L-glutamyl-tRNA(Glu) + NADPH + H(+). It functions in the pathway porphyrin-containing compound metabolism; protoporphyrin-IX biosynthesis; 5-aminolevulinate from L-glutamyl-tRNA(Glu): step 1/2. Its function is as follows. Catalyzes the NADPH-dependent reduction of glutamyl-tRNA(Glu) to glutamate 1-semialdehyde (GSA). This chain is Glutamyl-tRNA reductase, found in Erwinia tasmaniensis (strain DSM 17950 / CFBP 7177 / CIP 109463 / NCPPB 4357 / Et1/99).